A 265-amino-acid polypeptide reads, in one-letter code: Oxidoreductase nsrR (265 aa).

Belongs to the avfA family.

Its pathway is secondary metabolite biosynthesis. Its function is as follows. Oxidoreductase; part of the gene cluster that mediates the biosynthesis of the tetrahydroxanthone dimer neosartorin, which exhibits antibacterial activity. The two different monomeric units appear to be synthesized by the same set of enzymes, among which the Baeyer-Villiger monooxygenase nsrF is the key enzyme for the divergence of the biosynthetic routes. The pathway begins with the synthesis of atrochrysone thioester by the polyketide synthase nsrB. The atrochrysone carboxyl ACP thioesterase nsrC then breaks the thioester bond and releases the atrochrysone carboxylic acid from AacuL. Atrochrysone carboxylic acid is decarboxylated by the decarboxylase nsrE, and oxidized by the anthrone oxygenase nsrD to yield emodin. Emodin is then reduced to emodin hydroquinone by the oxidoreductase nsrR. A-ring reduction by the short chain dehydrogenase nsrJ, dehydration by the scytalone dehydratase-like protein nsrI and probable spontaneous re-oxidation, results in overall deoxygenation to chrysophanol. The Baeyer-Villiger monooxygenase nsrF accepts chrysophanol as a substrate to insert one oxygen atom at two different positions to yield the precursors of both monomric units. NsrF is promiscuous/flexible in interacting with the 2 (non methylated and methylated) aromatic rings of chrysophanol, thus diverging the biosynthetic pathway at this point. After the hydrolysis of the lactones, methylesterification by the methyltransferase nsrG yields respectively moniliphenone and 2,2',6'-trihydroxy-4-methyl-6-methoxya-cyldiphenylmethanone. The next steps are the hydroxylation by the FAD-dependent monooxygenase nsrK, followed by isomerization by the monooxygenase nsrQ. The short chain dehydrogenase/reductase nsrO then catalyzes the C-5 ketoreduction to give the xanthone skeleton of blennolide C and 5-acetylblennolide A. The acetyltransferase nsrL has a strict substrate specificity and uses only blennolide A but not blennolide C to yield 5-acetylblennolide A as the single-acetylated product. In the final step of the biosynthesis, the heterodimerization of the 2 xanthones, blennolide C and 5-acetylblennolide A, is catalyzed by the cytochrome P450 monooxygenase nsrP. NsrP can utilize at least three different xanthones as its substrates to perform the dimerization reaction. This Aspergillus novofumigatus (strain IBT 16806) protein is Oxidoreductase nsrR.